Consider the following 613-residue polypeptide: Dihydroxy-acid dehydratase (613 aa).

Residue D81 coordinates Mg(2+). C122 contributes to the [2Fe-2S] cluster binding site. Residues D123 and K124 each contribute to the Mg(2+) site. At K124 the chain carries N6-carboxylysine. A [2Fe-2S] cluster-binding site is contributed by C195. E491 lines the Mg(2+) pocket. The active-site Proton acceptor is the S517.

The protein belongs to the IlvD/Edd family. Homodimer. [2Fe-2S] cluster is required as a cofactor. The cofactor is Mg(2+).

It catalyses the reaction (2R)-2,3-dihydroxy-3-methylbutanoate = 3-methyl-2-oxobutanoate + H2O. The catalysed reaction is (2R,3R)-2,3-dihydroxy-3-methylpentanoate = (S)-3-methyl-2-oxopentanoate + H2O. Its pathway is amino-acid biosynthesis; L-isoleucine biosynthesis; L-isoleucine from 2-oxobutanoate: step 3/4. The protein operates within amino-acid biosynthesis; L-valine biosynthesis; L-valine from pyruvate: step 3/4. In terms of biological role, functions in the biosynthesis of branched-chain amino acids. Catalyzes the dehydration of (2R,3R)-2,3-dihydroxy-3-methylpentanoate (2,3-dihydroxy-3-methylvalerate) into 2-oxo-3-methylpentanoate (2-oxo-3-methylvalerate) and of (2R)-2,3-dihydroxy-3-methylbutanoate (2,3-dihydroxyisovalerate) into 2-oxo-3-methylbutanoate (2-oxoisovalerate), the penultimate precursor to L-isoleucine and L-valine, respectively. The polypeptide is Dihydroxy-acid dehydratase (Vibrio cholerae serotype O1 (strain ATCC 39541 / Classical Ogawa 395 / O395)).